A 225-amino-acid chain; its full sequence is MRSTYILIIVPLIIIGGGVVADNTNETPVLAHSSDEQPHQRLTYYNWDHKDLGTSAFEDLPPLQDQPTPLPIDQSDRCPDGWLRYSDSCYFIETESLGFAKAERKCHDKQATLFVANSMEEWDAVRDHAEKSVLSWIGLVRFSHYERLEQLPRWQTTGSINPSKINWLIKPFKPVVNGWSSYANCAASFQSPTEVESASYTFFYPCTMAFKSICERNSTILNARN.

The signal sequence occupies residues 1–21 (MRSTYILIIVPLIIIGGGVVA). The C-type lectin domain occupies 85-215 (YSDSCYFIET…CTMAFKSICE (131 aa)). 2 cysteine pairs are disulfide-bonded: C106/C214 and C185/C206. N-linked (GlcNAc...) asparagine glycosylation is present at N217.

Its subcellular location is the secreted. This is C-type lectin domain-containing protein 91 (clec-91) from Caenorhabditis elegans.